A 716-amino-acid polypeptide reads, in one-letter code: Ciliary WD repeat-containing protein ctxp80 (716 aa).

Residues Met1–Glu53 are disordered. A compositionally biased stretch (polar residues) spans Gly8–Asn21. Residues Glu23–Glu53 are compositionally biased toward basic and acidic residues. WD repeat units lie at residues Tyr167–Arg208, Lys213–Lys254, Ser257–Lys297, Gly305–Asp343, His345–Thr382, His424–Leu462, Asp529–Thr568, Ala571–Ser610, Thr639–Pro678, and Gly683–Lys715.

Belongs to the WD repeat EMAP family.

This Euplotoides octocarinatus (Freshwater ciliate) protein is Ciliary WD repeat-containing protein ctxp80.